A 642-amino-acid polypeptide reads, in one-letter code: MTDMPKTPLLDLVHRPADMKGLSDRQLVQLADELRSETVSAVSVTGGHLGAGLGVVELTVALHAVFDTPRDKIIWDVGHQCYPHKILTERRDRIRTLRMKGGLSGFTKRSESPYDPFGAAHSSTSISAALGFAVARDLGGVVPEGLGDAIAVIGDGSMSAGMAYEAMNNAGHLKKRMIVILNDNEMSIAPPTGAMSSYLSRLYSGEPFQDFKAAAKGAVSLLPEPFREGAKRAKDMLKGMAVGGTLFEELGFSYIGPIDGHDLDQLLPLLRTVKARATGPIMIHALTKKGKGYAPAETARDKGHATAKFDVLTGQQTKAPSNAPSYTKVFAQSLLEEATKDDKICAVTAAMPDGTGLNLFAERFPSRCFDVGIAEQHGVTFSAALAAGGMKPFCAMYSTFLQRGYDQVVHDVAIQRLPVRFAIDRAGLVGADGATHAGSFDIAYLANLPGFVVMAAADEAELKHMVATAVAHDDGPIAFRFPRGEGNGVDMPEVGEVLEIGKGRIITEGTRVAILSFGTRLAEVQKAGEALAARGITPTIADARFAKPLDREMILDLVANHEALITVEEGAIGGFGSHVAQLLSDEGVFDTGFKYRSMVLPDIFIDQSSPADMYAVAGMNAADIETKVLSVLGIAQIGEARA.

Thiamine diphosphate is bound by residues His-79 and 120-122 (AHS). Asp-155 is a Mg(2+) binding site. Thiamine diphosphate-binding positions include 156-157 (GS), Asn-184, Tyr-293, and Glu-375. Asn-184 contacts Mg(2+).

This sequence belongs to the transketolase family. DXPS subfamily. In terms of assembly, homodimer. Requires Mg(2+) as cofactor. The cofactor is thiamine diphosphate.

It catalyses the reaction D-glyceraldehyde 3-phosphate + pyruvate + H(+) = 1-deoxy-D-xylulose 5-phosphate + CO2. Its pathway is metabolic intermediate biosynthesis; 1-deoxy-D-xylulose 5-phosphate biosynthesis; 1-deoxy-D-xylulose 5-phosphate from D-glyceraldehyde 3-phosphate and pyruvate: step 1/1. In terms of biological role, catalyzes the acyloin condensation reaction between C atoms 2 and 3 of pyruvate and glyceraldehyde 3-phosphate to yield 1-deoxy-D-xylulose-5-phosphate (DXP). The sequence is that of 1-deoxy-D-xylulose-5-phosphate synthase 2 from Roseobacter denitrificans (strain ATCC 33942 / OCh 114) (Erythrobacter sp. (strain OCh 114)).